The chain runs to 253 residues: Probable transcriptional regulatory protein Mlut_12910 (253 aa).

This sequence belongs to the TACO1 family.

It is found in the cytoplasm. The chain is Probable transcriptional regulatory protein Mlut_12910 from Micrococcus luteus (strain ATCC 4698 / DSM 20030 / JCM 1464 / CCM 169 / CCUG 5858 / IAM 1056 / NBRC 3333 / NCIMB 9278 / NCTC 2665 / VKM Ac-2230) (Micrococcus lysodeikticus).